Here is a 419-residue protein sequence, read N- to C-terminus: Histidine--tRNA ligase (419 aa).

The protein belongs to the class-II aminoacyl-tRNA synthetase family. Homodimer.

The protein localises to the cytoplasm. The enzyme catalyses tRNA(His) + L-histidine + ATP = L-histidyl-tRNA(His) + AMP + diphosphate + H(+). This chain is Histidine--tRNA ligase, found in Desulforamulus reducens (strain ATCC BAA-1160 / DSM 100696 / MI-1) (Desulfotomaculum reducens).